Consider the following 601-residue polypeptide: 1-deoxy-D-xylulose-5-phosphate synthase (601 aa).

Thiamine diphosphate contacts are provided by residues His-63 and 104–106; that span reads GHS. Asp-135 is a binding site for Mg(2+). Thiamine diphosphate is bound by residues 136–137, Asn-164, Tyr-272, and Glu-353; that span reads GS. Asn-164 is a Mg(2+) binding site.

The protein belongs to the transketolase family. DXPS subfamily. Homodimer. Requires Mg(2+) as cofactor. Thiamine diphosphate is required as a cofactor.

It catalyses the reaction D-glyceraldehyde 3-phosphate + pyruvate + H(+) = 1-deoxy-D-xylulose 5-phosphate + CO2. The protein operates within metabolic intermediate biosynthesis; 1-deoxy-D-xylulose 5-phosphate biosynthesis; 1-deoxy-D-xylulose 5-phosphate from D-glyceraldehyde 3-phosphate and pyruvate: step 1/1. In terms of biological role, catalyzes the acyloin condensation reaction between C atoms 2 and 3 of pyruvate and glyceraldehyde 3-phosphate to yield 1-deoxy-D-xylulose-5-phosphate (DXP). This chain is 1-deoxy-D-xylulose-5-phosphate synthase, found in Aliarcobacter butzleri (strain RM4018) (Arcobacter butzleri).